We begin with the raw amino-acid sequence, 538 residues long: Chaperonin GroEL 1 (538 aa).

ATP is bound by residues 29-32 (TLGP), 86-90 (DGTTT), Gly413, and Asp494.

Belongs to the chaperonin (HSP60) family. In terms of assembly, forms a cylinder of 14 subunits composed of two heptameric rings stacked back-to-back. Interacts with the co-chaperonin GroES.

Its subcellular location is the cytoplasm. It carries out the reaction ATP + H2O + a folded polypeptide = ADP + phosphate + an unfolded polypeptide.. In terms of biological role, together with its co-chaperonin GroES, plays an essential role in assisting protein folding. The GroEL-GroES system forms a nano-cage that allows encapsulation of the non-native substrate proteins and provides a physical environment optimized to promote and accelerate protein folding. The sequence is that of Chaperonin GroEL 1 from Mycobacterium avium (strain 104).